We begin with the raw amino-acid sequence, 166 residues long: MEASGERAAVVRRLMEVKEESGKTFSEIAAETGLTNVYVAQLLRRQAHLKADTVPALRAALPTLTDELVQLMMQPPFRSYNPDIVQEPAIYRLNEAVMHFGESIKEIINEEFGDGIMSAIDFYCSVDKVQGADGKDRVVVTFDGKYLPYTEQKSEHMMSRPTRKTS.

Catalysis depends on residues arginine 92, glutamate 95, and serine 118.

The protein belongs to the cyanase family.

The enzyme catalyses cyanate + hydrogencarbonate + 3 H(+) = NH4(+) + 2 CO2. In terms of biological role, catalyzes the reaction of cyanate with bicarbonate to produce ammonia and carbon dioxide. This Sorghum bicolor (Sorghum) protein is Cyanate hydratase.